The following is a 201-amino-acid chain: MQTSPLLESLMEALRCLPGVGPRSAQRMAFQLLQRNRSGGMRLAQALTQAMSEIGHCSDCRTFTEQDVCAICSNPRRQQNGLVCVVESPADIHAIEQTGQFAGRYFVLMGHLSPLDGIGPDDIGLGRLEERLQVESFNEVILATNPTVEGDATANYIAELCAQHGVMASRIAHGVPVGGELEMVDGTTLSHSLAGRQPFRF.

A C4-type zinc finger spans residues 57 to 72 (CSDCRTFTEQDVCAIC). The region spanning 81-176 (GLVCVVESPA…MASRIAHGVP (96 aa)) is the Toprim domain.

The protein belongs to the RecR family.

Functionally, may play a role in DNA repair. It seems to be involved in an RecBC-independent recombinational process of DNA repair. It may act with RecF and RecO. The chain is Recombination protein RecR from Pectobacterium atrosepticum (strain SCRI 1043 / ATCC BAA-672) (Erwinia carotovora subsp. atroseptica).